The primary structure comprises 185 residues: Ribosome-recycling factor (185 aa).

The protein belongs to the RRF family.

Its subcellular location is the cytoplasm. In terms of biological role, responsible for the release of ribosomes from messenger RNA at the termination of protein biosynthesis. May increase the efficiency of translation by recycling ribosomes from one round of translation to another. This chain is Ribosome-recycling factor, found in Campylobacter lari (strain RM2100 / D67 / ATCC BAA-1060).